Consider the following 48-residue polypeptide: ATP synthase protein 8 (48 aa).

Residues 4–24 (LVPFFFVNQVVFAFIVLTVLI) form a helical membrane-spanning segment.

It belongs to the ATPase protein 8 family. In terms of assembly, F-type ATPases have 2 components, CF(1) - the catalytic core - and CF(0) - the membrane proton channel.

It is found in the mitochondrion membrane. Its function is as follows. Mitochondrial membrane ATP synthase (F(1)F(0) ATP synthase or Complex V) produces ATP from ADP in the presence of a proton gradient across the membrane which is generated by electron transport complexes of the respiratory chain. F-type ATPases consist of two structural domains, F(1) - containing the extramembraneous catalytic core and F(0) - containing the membrane proton channel, linked together by a central stalk and a peripheral stalk. During catalysis, ATP synthesis in the catalytic domain of F(1) is coupled via a rotary mechanism of the central stalk subunits to proton translocation. Part of the complex F(0) domain. Minor subunit located with subunit a in the membrane. This Emericella nidulans (Aspergillus nidulans) protein is ATP synthase protein 8 (atp8).